We begin with the raw amino-acid sequence, 513 residues long: MRKIEFFDTSLRDGEQTPGVSFSISEKVTIAKQLEKWRISVIEAGFSAASPDSFEAVKQIADSLNDTAVTALARCVISDIDKAVEAVKGAKYPQIHVFIATSPIHMKYKLKISPEEVLKNIDKCVRYARERVEVVEFSPEDATRTELNFLLEAVQTAVDAGATYINIPDTVGYTTPEEYGKIFKFLIDNTKSDREIIFSPHCHDDLGMAVANSLAAIKAGAGRVEGTVNGIGERAGNAALEEIAVALHIRKDFYQAQSPLKLSETAATAELISQFSGIAIPKNKAIVGANAFAHESGIHQDGVLKNAETYEIITPELVGIKHNSLPLGKLSGRHAFSEKLTELNIAYDDESLAILFEKFKKLADKKKEITDADIHALFTGETVKNLAGFILDNVQIDGHKALVQLKNQEEEIYVSQGEGSGSVDAIFKAIDKVFNHQLKLISYSVDAVTDGIDAQATTLVSVENLSTGTIFNAKGVDYDVLKGSAIAYMNANVLVQKENLQGKVEQISAHDGI.

The region spanning 4–266 (IEFFDTSLRD…QSPLKLSETA (263 aa)) is the Pyruvate carboxyltransferase domain. D13, H201, H203, and N237 together coordinate Mn(2+). The regulatory domain stretch occupies residues 390-513 (ILDNVQIDGH…VEQISAHDGI (124 aa)).

Belongs to the alpha-IPM synthase/homocitrate synthase family. LeuA type 1 subfamily. Homodimer. It depends on Mn(2+) as a cofactor.

It is found in the cytoplasm. The enzyme catalyses 3-methyl-2-oxobutanoate + acetyl-CoA + H2O = (2S)-2-isopropylmalate + CoA + H(+). It participates in amino-acid biosynthesis; L-leucine biosynthesis; L-leucine from 3-methyl-2-oxobutanoate: step 1/4. Functionally, catalyzes the condensation of the acetyl group of acetyl-CoA with 3-methyl-2-oxobutanoate (2-ketoisovalerate) to form 3-carboxy-3-hydroxy-4-methylpentanoate (2-isopropylmalate). In Lactococcus lactis subsp. lactis (strain IL1403) (Streptococcus lactis), this protein is 2-isopropylmalate synthase.